Consider the following 356-residue polypeptide: Zinc finger CW-type PWWP domain protein 2 (356 aa).

The CW-type zinc-finger motif lies at 24-79 (MYVNKVWVQCENENCLKWRLLSSEDSAKVDHDEPWYCFMNTDSRYNNCSISEEDFP). Residues Cys33, Cys38, Cys60, and Cys71 each contribute to the Zn(2+) site. One can recognise a PWWP domain in the interval 98-162 (LGSLVLVKLQ…ATFVGHYSIT (65 aa)). The interval 279-307 (QALQPTATPDESEEGHGEEINMGEKLSKC) is disordered.

Histone methylation reader which binds to non-methylated (H3K4me0), monomethylated (H3K4me1), dimethylated (H3K4me2) and trimethylated (H3K4me3) 'Lys-4' on histone H3. The order of binding preference is H3K4me3 &gt; H3K4me2 &gt; H3K4me1 &gt; H3K4me0. The protein is Zinc finger CW-type PWWP domain protein 2 (ZCWPW2) of Homo sapiens (Human).